The sequence spans 148 residues: Hemoglobin subunit beta (148 aa).

The Globin domain maps to 3–148 (XWTDXERHVI…AVAALGKQYH (146 aa)). Heme b contacts are provided by histidine 64 and histidine 93.

Belongs to the globin family. As to quaternary structure, heterotetramer of two alpha chains and two beta chains. Red blood cells.

Functionally, involved in oxygen transport from gills to the various peripheral tissues. The polypeptide is Hemoglobin subunit beta (hbb) (Silurus asotus (Amur catfish)).